The primary structure comprises 612 residues: uncharacterized protein (612 aa).

The stretch at 39–100 (ERDHNLWEIE…KNISVKDLDE (62 aa)) forms a coiled coil. Positions 219-241 (PLSSGESLPKKEEEVTKSPSFTL) are disordered. 7 WD repeats span residues 286–325 (TSTQCITHQPLPGSTPSFASGTENGVINVWRLDEDSNDNS), 337–376 (GHEGPVLCVCVPKATHHIFSGGHDGTIRCWSLPANQTSDS), 389–432 (GHED…FKIR), 434–470 (DSKQPLSMSVTDSRIAIAYNDGNVRFYDLDTQILVSQ), 483–523 (AVKD…LLAE), 526–565 (ISKVSLTGIAFAVNRPEFAISASDGRVFFLRQDDKLSTLE), and 574–612 (EEITDLSDILWINSPVDKLEHLIVGCKERISVYDRKYLP).

The protein localises to the cytoplasm. This is an uncharacterized protein from Schizosaccharomyces pombe (strain 972 / ATCC 24843) (Fission yeast).